We begin with the raw amino-acid sequence, 86 residues long: Small ribosomal subunit protein bS20 (86 aa).

A compositionally biased stretch (basic residues) spans Met-1 to Asn-11. The segment at Met-1 to Asn-21 is disordered.

This sequence belongs to the bacterial ribosomal protein bS20 family.

Its function is as follows. Binds directly to 16S ribosomal RNA. The polypeptide is Small ribosomal subunit protein bS20 (Onion yellows phytoplasma (strain OY-M)).